We begin with the raw amino-acid sequence, 311 residues long: MKKGYIFILLTAIFYSTQEISGKMLAQKGAMDPFQVMMIVFLIGAIILLPMAVKDIKVKKLKLTGNDLGYLALCGILAVSISMSMLQFAVTYTKASTAAVLFCTNAVFTIPFAYFILKEKIKGITIVSIIVSLIGVVIIFNPAKVMEGIGGSRDLIGICFALVAAVVWSLYTVISKKRIEIYGGYVFNCISFFFGVIALLILLVVTGRPIFSGITLNNILVLLYMGIFIKAVGYICYLGAIKETSAVTASTVFLIKPALATVLAILILGESIEVNVVIGIVFIIIGSIINYSSNKKANDLKKVANTSSAES.

A run of 10 helical transmembrane segments spans residues 6-26 (IFIL…KMLA), 33-53 (PFQV…PMAV), 70-90 (YLAL…QFAV), 97-117 (TAAV…YFIL), 123-143 (GITI…FNPA), 155-175 (LIGI…TVIS), 185-205 (YVFN…LLVV), 219-239 (ILVL…CYLG), 244-264 (TSAV…TVLA), and 265-285 (ILIL…FIII). EamA domains follow at residues 12–141 (AIFY…IIFN) and 166–292 (VVWS…INYS).

The protein belongs to the EamA transporter family.

The protein localises to the cell membrane. This is an uncharacterized protein from Clostridium kluyveri (strain ATCC 8527 / DSM 555 / NBRC 12016 / NCIMB 10680 / K1).